A 526-amino-acid polypeptide reads, in one-letter code: Peptide chain release factor 3 (526 aa).

The tr-type G domain occupies 9-277; that stretch reads DKRRTFAIIS…GIVEWAPKPQ (269 aa). Residues 18 to 25, 86 to 90, and 140 to 143 each bind GTP; these read SHPDAGKT, DTPGH, and NKLD.

This sequence belongs to the TRAFAC class translation factor GTPase superfamily. Classic translation factor GTPase family. PrfC subfamily.

It localises to the cytoplasm. In terms of biological role, increases the formation of ribosomal termination complexes and stimulates activities of RF-1 and RF-2. It binds guanine nucleotides and has strong preference for UGA stop codons. It may interact directly with the ribosome. The stimulation of RF-1 and RF-2 is significantly reduced by GTP and GDP, but not by GMP. The polypeptide is Peptide chain release factor 3 (Shewanella sediminis (strain HAW-EB3)).